Consider the following 265-residue polypeptide: Eukaryotic translation initiation factor 3 subunit J (265 aa).

Acidic residues-rich tracts occupy residues methionine 1–serine 12 and aspartate 26–valine 44. Disordered stretches follow at residues methionine 1 to leucine 113 and threonine 212 to methionine 265. 2 stretches are compositionally biased toward basic and acidic residues: residues glutamate 45–alanine 65 and arginine 73–glutamate 86. Positions alanine 61–glutamate 95 form a coiled coil. A compositionally biased stretch (acidic residues) spans glutamate 87–aspartate 97. The span at glutamate 216–serine 228 shows a compositional bias: basic and acidic residues. Residues aspartate 251–methionine 265 are compositionally biased toward acidic residues.

This sequence belongs to the eIF-3 subunit J family. Component of the eukaryotic translation initiation factor 3 (eIF-3) complex.

The protein resides in the cytoplasm. Functionally, component of the eukaryotic translation initiation factor 3 (eIF-3) complex, which is involved in protein synthesis of a specialized repertoire of mRNAs and, together with other initiation factors, stimulates binding of mRNA and methionyl-tRNAi to the 40S ribosome. The eIF-3 complex specifically targets and initiates translation of a subset of mRNAs involved in cell proliferation. The sequence is that of Eukaryotic translation initiation factor 3 subunit J (hcr1) from Aspergillus oryzae (strain ATCC 42149 / RIB 40) (Yellow koji mold).